Consider the following 233-residue polypeptide: Mediator of RNA polymerase II transcription subunit 7 (233 aa).

K185 is covalently cross-linked (Glycyl lysine isopeptide (Lys-Gly) (interchain with G-Cter in SUMO1); alternate). K185 participates in a covalent cross-link: Glycyl lysine isopeptide (Lys-Gly) (interchain with G-Cter in SUMO2); alternate. Positions 185-213 (KTEPMDTDDSNNCIGQNEQQRENSGHRRD) are disordered. At S194 the chain carries Phosphoserine. The span at 203-213 (QQRENSGHRRD) shows a compositional bias: basic and acidic residues.

The protein belongs to the Mediator complex subunit 7 family. Component of the Mediator complex, which is composed of MED1, MED4, MED6, MED7, MED8, MED9, MED10, MED11, MED12, MED13, MED13L, MED14, MED15, MED16, MED17, MED18, MED19, MED20, MED21, MED22, MED23, MED24, MED25, MED26, MED27, MED29, MED30, MED31, CCNC, CDK8 and CDC2L6/CDK11. The MED12, MED13, CCNC and CDK8 subunits form a distinct module termed the CDK8 module. Mediator containing the CDK8 module is less active than Mediator lacking this module in supporting transcriptional activation. Individual preparations of the Mediator complex lacking one or more distinct subunits have been variously termed ARC, CRSP, DRIP, PC2, SMCC and TRAP.

Its subcellular location is the nucleus. Its function is as follows. Component of the Mediator complex, a coactivator involved in the regulated transcription of nearly all RNA polymerase II-dependent genes. Mediator functions as a bridge to convey information from gene-specific regulatory proteins to the basal RNA polymerase II transcription machinery. Mediator is recruited to promoters by direct interactions with regulatory proteins and serves as a scaffold for the assembly of a functional preinitiation complex with RNA polymerase II and the general transcription factors. The protein is Mediator of RNA polymerase II transcription subunit 7 (MED7) of Bos taurus (Bovine).